Here is a 194-residue protein sequence, read N- to C-terminus: Peptidyl-tRNA hydrolase (194 aa).

A tRNA-binding site is contributed by tyrosine 17. Histidine 22 serves as the catalytic Proton acceptor. TRNA-binding residues include tyrosine 68, asparagine 70, and asparagine 116.

Belongs to the PTH family. As to quaternary structure, monomer.

The protein resides in the cytoplasm. It carries out the reaction an N-acyl-L-alpha-aminoacyl-tRNA + H2O = an N-acyl-L-amino acid + a tRNA + H(+). In terms of biological role, hydrolyzes ribosome-free peptidyl-tRNAs (with 1 or more amino acids incorporated), which drop off the ribosome during protein synthesis, or as a result of ribosome stalling. Functionally, catalyzes the release of premature peptidyl moieties from peptidyl-tRNA molecules trapped in stalled 50S ribosomal subunits, and thus maintains levels of free tRNAs and 50S ribosomes. This is Peptidyl-tRNA hydrolase from Pseudomonas paraeruginosa (strain DSM 24068 / PA7) (Pseudomonas aeruginosa (strain PA7)).